We begin with the raw amino-acid sequence, 168 residues long: Thioredoxin Y, chloroplastic (168 aa).

Residues 1–58 (MAAFTSTTTAAAASPTPCRPAALVARSSAAPLRSAAPVVVAAGLRRAAAPSRRGATLR) constitute a chloroplast transit peptide. A Thioredoxin domain is found at 59 to 165 (VQAKKQTFSS…LIQQIESALE (107 aa)). Active-site nucleophile residues include C89 and C92. Residues C89 and C92 are joined by a disulfide bond.

Belongs to the thioredoxin family. Plant Y-type subfamily.

It is found in the plastid. Its subcellular location is the chloroplast. Functionally, probable thiol-disulfide oxidoreductase that may participate in various redox reactions. In Oryza sativa subsp. japonica (Rice), this protein is Thioredoxin Y, chloroplastic.